The sequence spans 96 residues: Large ribosomal subunit protein uL4 (96 aa).

Residues 77–96 form a disordered region; the sequence is RAPNKKVKRRELKKNPLKNL. The segment covering 79–96 has biased composition (basic residues); the sequence is PNKKVKRRELKKNPLKNL.

This sequence belongs to the universal ribosomal protein uL4 family. Component of the large ribosomal subunit.

It is found in the cytoplasm. Functionally, component of the large ribosomal subunit. The ribosome is a large ribonucleoprotein complex responsible for the synthesis of proteins in the cell. In Xenopus tropicalis (Western clawed frog), this protein is Large ribosomal subunit protein uL4 (rpl4).